We begin with the raw amino-acid sequence, 71 residues long: Long neurotoxin 1 (71 aa).

Disulfide bonds link Cys-3–Cys-20, Cys-14–Cys-41, Cys-26–Cys-30, Cys-45–Cys-56, and Cys-57–Cys-62.

Belongs to the three-finger toxin family. Long-chain subfamily. Type II alpha-neurotoxin sub-subfamily. Expressed by the venom gland.

The protein resides in the secreted. Functionally, binds with high affinity to muscular (alpha-1/CHRNA1) and neuronal (alpha-7/CHRNA7) nicotinic acetylcholine receptor (nAChR) and inhibits acetylcholine from binding to the receptor, thereby impairing neuromuscular and neuronal transmission. The polypeptide is Long neurotoxin 1 (Naja naja (Indian cobra)).